The sequence spans 104 residues: Flagellar hook-basal body complex protein FliE (104 aa).

It belongs to the FliE family.

It is found in the bacterial flagellum basal body. This Escherichia coli O6:K15:H31 (strain 536 / UPEC) protein is Flagellar hook-basal body complex protein FliE.